The following is a 112-amino-acid chain: Cell cycle protein GpsB (112 aa).

A coiled-coil region spans residues 42 to 77 (YQKMADMNNEVVKLSEENHKLKKELEELRLRVATSR). Residues 74–96 (ATSRPQDNKNFSSNNSSSASNNV) form a disordered region. Low complexity predominate over residues 81–95 (NKNFSSNNSSSASNN).

This sequence belongs to the GpsB family. Forms polymers through the coiled coil domains. Interacts with PBP1, MreC and EzrA.

It localises to the cytoplasm. Its function is as follows. Divisome component that associates with the complex late in its assembly, after the Z-ring is formed, and is dependent on DivIC and PBP2B for its recruitment to the divisome. Together with EzrA, is a key component of the system that regulates PBP1 localization during cell cycle progression. Its main role could be the removal of PBP1 from the cell pole after pole maturation is completed. Also contributes to the recruitment of PBP1 to the division complex. Not essential for septum formation. This chain is Cell cycle protein GpsB, found in Staphylococcus epidermidis (strain ATCC 12228 / FDA PCI 1200).